The primary structure comprises 171 residues: Lipoprotein signal peptidase (171 aa).

4 helical membrane passes run 12 to 32, 42 to 62, 70 to 90, and 96 to 116; these read LAWL…KLYF, IVVI…AAFS, WQRW…VVWL, and NETW…GNLY. Residues Asp-126 and Asp-145 contribute to the active site. Residues 137 to 157 traverse the membrane as a helical segment; it reads YFPAFNVADSAITVGAVMLAL.

The protein belongs to the peptidase A8 family.

It localises to the cell inner membrane. It carries out the reaction Release of signal peptides from bacterial membrane prolipoproteins. Hydrolyzes -Xaa-Yaa-Zaa-|-(S,diacylglyceryl)Cys-, in which Xaa is hydrophobic (preferably Leu), and Yaa (Ala or Ser) and Zaa (Gly or Ala) have small, neutral side chains.. The protein operates within protein modification; lipoprotein biosynthesis (signal peptide cleavage). Functionally, this protein specifically catalyzes the removal of signal peptides from prolipoproteins. The chain is Lipoprotein signal peptidase from Pseudomonas putida (strain ATCC 47054 / DSM 6125 / CFBP 8728 / NCIMB 11950 / KT2440).